Reading from the N-terminus, the 119-residue chain is Large ribosomal subunit protein uL18 (119 aa).

This sequence belongs to the universal ribosomal protein uL18 family. Part of the 50S ribosomal subunit; part of the 5S rRNA/L5/L18/L25 subcomplex. Contacts the 5S and 23S rRNAs.

In terms of biological role, this is one of the proteins that bind and probably mediate the attachment of the 5S RNA into the large ribosomal subunit, where it forms part of the central protuberance. This chain is Large ribosomal subunit protein uL18, found in Lactobacillus delbrueckii subsp. bulgaricus (strain ATCC 11842 / DSM 20081 / BCRC 10696 / JCM 1002 / NBRC 13953 / NCIMB 11778 / NCTC 12712 / WDCM 00102 / Lb 14).